The following is a 198-amino-acid chain: Sortase D (198 aa).

The chain crosses the membrane as a helical span at residues 7 to 25 (LFIIAAGLVIAGYGGFKLI). Basic and acidic residues predominate over residues 36 to 46 (KEAKLAAKKPQ). Residues 36–67 (KEAKLAAKKPQEASGTKNSTDQAKNKASFKPE) are disordered. Over residues 48–57 (ASGTKNSTDQ) the composition is skewed to polar residues. His-119 functions as the Proton donor/acceptor in the catalytic mechanism. Cys-177 (acyl-thioester intermediate) is an active-site residue.

This sequence belongs to the bacterial sortase family. Class D subfamily.

It is found in the cell membrane. In terms of biological role, transpeptidase that anchors surface proteins to the cell wall. Recognizes and modifies its substrate by proteolytic cleavage of a C-terminal sorting signal. Following cleavage, a covalent intermediate is formed via a thioester bond between the sortase and its substrate, which is then transferred and covalently attached to the cell wall. This sortase recognizes a Leu-Pro-Asp-Thr-Ser/Ala (LPDTS/A) motif. It has two substrates, YhcR and YfkN. The protein is Sortase D of Bacillus subtilis (strain 168).